The chain runs to 641 residues: Soluble starch synthase 1, chloroplastic/amyloplastic (641 aa).

A chloroplast-targeting transit peptide spans M1–A113. Positions T62 to P96 are disordered. Over residues S68–P87 the composition is skewed to pro residues. K147 lines the ADP-alpha-D-glucose pocket.

It belongs to the glycosyltransferase 1 family. Bacterial/plant glycogen synthase subfamily. In terms of tissue distribution, leaves and immature seeds.

It is found in the plastid. The protein resides in the chloroplast. It localises to the amyloplast. The catalysed reaction is [(1-&gt;4)-alpha-D-glucosyl](n) + ADP-alpha-D-glucose = [(1-&gt;4)-alpha-D-glucosyl](n+1) + ADP + H(+). It functions in the pathway glycan biosynthesis; starch biosynthesis. In terms of biological role, involved in starch synthesis in endosperm amyloplasts. Plays a role in the elongation of amylopectin chains. Synthesizes preferentially amylopectin chains with a degree of polymerization (DP) of 7 to 11 by elongating chains with a DP of 4 to 7. Generates distincly chains with a DP of 8 to 12 chains from short chains with a DP of 6 to 7. This Oryza sativa subsp. japonica (Rice) protein is Soluble starch synthase 1, chloroplastic/amyloplastic.